The primary structure comprises 417 residues: Gamma-glutamyl phosphate reductase (417 aa).

It belongs to the gamma-glutamyl phosphate reductase family.

The protein resides in the cytoplasm. It carries out the reaction L-glutamate 5-semialdehyde + phosphate + NADP(+) = L-glutamyl 5-phosphate + NADPH + H(+). The protein operates within amino-acid biosynthesis; L-proline biosynthesis; L-glutamate 5-semialdehyde from L-glutamate: step 2/2. Catalyzes the NADPH-dependent reduction of L-glutamate 5-phosphate into L-glutamate 5-semialdehyde and phosphate. The product spontaneously undergoes cyclization to form 1-pyrroline-5-carboxylate. The sequence is that of Gamma-glutamyl phosphate reductase from Bacteroides thetaiotaomicron (strain ATCC 29148 / DSM 2079 / JCM 5827 / CCUG 10774 / NCTC 10582 / VPI-5482 / E50).